Reading from the N-terminus, the 159-residue chain is Ribosome maturation factor RimP (159 aa).

It belongs to the RimP family.

Its subcellular location is the cytoplasm. In terms of biological role, required for maturation of 30S ribosomal subunits. In Halothermothrix orenii (strain H 168 / OCM 544 / DSM 9562), this protein is Ribosome maturation factor RimP.